We begin with the raw amino-acid sequence, 433 residues long: ATP-dependent protease ATPase subunit HslU (433 aa).

Residues V18, 60 to 65, D246, E311, and R383 each bind ATP; that span reads GVGKTE.

The protein belongs to the ClpX chaperone family. HslU subfamily. As to quaternary structure, a double ring-shaped homohexamer of HslV is capped on each side by a ring-shaped HslU homohexamer. The assembly of the HslU/HslV complex is dependent on binding of ATP.

Its subcellular location is the cytoplasm. In terms of biological role, ATPase subunit of a proteasome-like degradation complex; this subunit has chaperone activity. The binding of ATP and its subsequent hydrolysis by HslU are essential for unfolding of protein substrates subsequently hydrolyzed by HslV. HslU recognizes the N-terminal part of its protein substrates and unfolds these before they are guided to HslV for hydrolysis. This is ATP-dependent protease ATPase subunit HslU from Nitrobacter hamburgensis (strain DSM 10229 / NCIMB 13809 / X14).